The sequence spans 145 residues: Putative pre-16S rRNA nuclease (145 aa).

This sequence belongs to the YqgF nuclease family.

It is found in the cytoplasm. Could be a nuclease involved in processing of the 5'-end of pre-16S rRNA. This chain is Putative pre-16S rRNA nuclease, found in Sulfurihydrogenibium sp. (strain YO3AOP1).